The primary structure comprises 128 residues: MFS18 protein (128 aa).

A signal peptide spans 1 to 25 (MARSSKMMVAARLLALALAVSTAEA). Residues 26-79 (RNIKTTTTEKKDDAVVQPQTFPPFDRLGGGASPAFGGLPGGSIPGSSIPGFSMP) form a disordered region. The span at 52–68 (LGGGASPAFGGLPGGSI) shows a compositional bias: gly residues. A run of 11 repeats spans residues 64 to 67 (PGGS), 64 to 75 (PGGSIPGSSIPG), 69 to 72 (PGSS), 69 to 80 (PGSSIPGFSMPG), 74 to 77 (PGFS), 79 to 82 (PGSG), 81 to 92 (SGSSLPGFSLPG), 86 to 89 (PGFS), 91 to 94 (PGSG), 104 to 107 (PGFS), and 113 to 116 (PGSP). Positions 64 to 92 (PGGSIPGSSIPGFSMPGSGSSLPGFSLPG) are 3 X approximate tandem repeats. The segment at 64–116 (PGGSIPGSSIPGFSMPGSGSSLPGFSLPGSGTMPLFGGGSPGFSGFGGMPGSP) is 8 X 4 AA approximate repeats. The segment covering 69–79 (PGSSIPGFSMP) has biased composition (low complexity). Residues 99–113 (FGGGSPGFSGFGGMP) are compositionally biased toward gly residues. Residues 99–128 (FGGGSPGFSGFGGMPGSPTAGSVPEHANKP) form a disordered region.

As to expression, enhanced expression in male flowers. Accumulates in the glumes and in anther walls, paleas and lemmas of mature florets.

The chain is MFS18 protein (MFS18) from Zea mays (Maize).